Here is a 215-residue protein sequence, read N- to C-terminus: Pyrrolidone-carboxylate peptidase (215 aa).

Residues E80, C143, and H167 contribute to the active site.

The protein belongs to the peptidase C15 family. Homotetramer.

The protein resides in the cytoplasm. The enzyme catalyses Release of an N-terminal pyroglutamyl group from a polypeptide, the second amino acid generally not being Pro.. Removes 5-oxoproline from various penultimate amino acid residues except L-proline. In Bacillus cereus (strain B4264), this protein is Pyrrolidone-carboxylate peptidase.